The chain runs to 415 residues: Carbamoyl phosphate synthase arginine-specific small chain (415 aa).

Residues 1-17 constitute a mitochondrion transit peptide; that stretch reads MLRFLKPFPLRFGKRFY. 3 residues coordinate L-glutamine: Ser88, Gly272, and Gly274. The Glutamine amidotransferase type-1 domain maps to 225–412; that stretch reads NIAVIDCGVK…IKEAIKYQKS (188 aa). Cys301 serves as the catalytic Nucleophile. L-glutamine contacts are provided by Met302, Gln305, Asn343, Gly345, and Tyr346. Active-site residues include His385 and Glu387.

It belongs to the CarA family. Heterodimer composed of 2 chains; the small (or glutamine) chain promotes the hydrolysis of glutamine to ammonia, which is used by the large (or ammonia) chain to synthesize carbamoyl phosphate.

The protein localises to the mitochondrion. The protein resides in the cytoplasm. The enzyme catalyses hydrogencarbonate + L-glutamine + 2 ATP + H2O = carbamoyl phosphate + L-glutamate + 2 ADP + phosphate + 2 H(+). The catalysed reaction is L-glutamine + H2O = L-glutamate + NH4(+). It participates in amino-acid biosynthesis; L-arginine biosynthesis; carbamoyl phosphate from bicarbonate: step 1/1. Small subunit of the arginine-specific carbamoyl phosphate synthase (CPSase). CPSase catalyzes the formation of carbamoyl phosphate from the ammonia moiety of glutamine, carbonate, and phosphate donated by ATP, the first step of the arginine biosynthetic pathway. The small subunit (glutamine amidotransferase) binds and cleaves glutamine to supply the large subunit with the substrate ammonia. The polypeptide is Carbamoyl phosphate synthase arginine-specific small chain (arg5) (Schizosaccharomyces pombe (strain 972 / ATCC 24843) (Fission yeast)).